Here is an 80-residue protein sequence, read N- to C-terminus: Large ribosomal subunit protein eL20 (80 aa).

It belongs to the eukaryotic ribosomal protein eL20 family. Part of the 50S ribosomal subunit. Binds 23S rRNA.

The protein is Large ribosomal subunit protein eL20 of Methanopyrus kandleri (strain AV19 / DSM 6324 / JCM 9639 / NBRC 100938).